Consider the following 158-residue polypeptide: NAD(P)H-quinone oxidoreductase subunit J, chloroplastic (158 aa).

It belongs to the complex I 30 kDa subunit family. As to quaternary structure, NDH is composed of at least 16 different subunits, 5 of which are encoded in the nucleus.

The protein resides in the plastid. The protein localises to the chloroplast thylakoid membrane. The catalysed reaction is a plastoquinone + NADH + (n+1) H(+)(in) = a plastoquinol + NAD(+) + n H(+)(out). It catalyses the reaction a plastoquinone + NADPH + (n+1) H(+)(in) = a plastoquinol + NADP(+) + n H(+)(out). In terms of biological role, NDH shuttles electrons from NAD(P)H:plastoquinone, via FMN and iron-sulfur (Fe-S) centers, to quinones in the photosynthetic chain and possibly in a chloroplast respiratory chain. The immediate electron acceptor for the enzyme in this species is believed to be plastoquinone. Couples the redox reaction to proton translocation, and thus conserves the redox energy in a proton gradient. This is NAD(P)H-quinone oxidoreductase subunit J, chloroplastic from Solanum lycopersicum (Tomato).